A 373-amino-acid polypeptide reads, in one-letter code: Alpha-ketoglutarate dependent kainoid synthase (373 aa).

The Fe2OG dioxygenase domain maps to Thr204–Pro320. His235, Asp237, and His296 together coordinate Fe cation. Arg311 is a 2-oxoglutarate binding site.

This sequence belongs to the iron/ascorbate-dependent oxidoreductase family. Fe(2+) is required as a cofactor.

The enzyme catalyses N-(7'-carboxy-7'-demethylgeranyl)-L-glutamate + 2-oxoglutarate + O2 = isodomoate A + succinate + CO2 + H2O. It carries out the reaction N-geranyl-L-glutamate + 2-oxoglutarate + O2 = dainate A + succinate + CO2 + H2O. It participates in secondary metabolite biosynthesis. Iron/ascorbate-dependent oxidoreductase: part of the gene cluster that mediates the biosynthesis of domoic acid (DA) and derivatives, natural products with neurochemical activity acting as ionotropic glutamate receptor (iGluR) agonists, thus being neurotoxins causing amnesic shellfish poisoning (ASP). Catalyzes the conversion of 7'-N-carboxy-L-geranyl-L-glutamic acid (cNGG) to isodomoic acid-A. Also mediates the conversion of N-geranyl-L-glutamic acid (L-NGG) to dainic acid A. In Pseudo-nitzschia multiseries (Marine planktonic diatom), this protein is Alpha-ketoglutarate dependent kainoid synthase.